Here is a 2191-residue protein sequence, read N- to C-terminus: Genome polyprotein (2191 aa).

Gly-2 carries N-myristoyl glycine; by host lipidation. At 2-1501 (GAQVSTQKTG…HVSRAFICLQ (1500 aa)) the chain is on the cytoplasmic side. The interval 566 to 582 (FYQNDVQNAVERSIVRV) is amphipathic alpha-helix. Catalysis depends on for protease 2A activity residues His-878 and Asp-896. The Zn(2+) site is built by Cys-913 and Cys-915. The For protease 2A activity role is filled by Cys-967. Zn(2+) is bound by residues Cys-973 and His-975. The segment at 1107 to 1179 (NNGWLKKFTE…EQSAPSQSDQ (73 aa)) is membrane-binding. Residues 1107-1245 (NNGWLKKFTE…SPGVGKSVAT (139 aa)) form an oligomerization region. The tract at residues 1128-1132 (AIKIQ) is RNA-binding. The SF3 helicase domain occupies 1211–1367 (EKKMSNYIQF…SMYNQNGKIN (157 aa)). Residues Cys-1375, Cys-1387, and Cys-1392 each contribute to the Zn(2+) site. Residues 1375–1392 (CDEECCPVNFKKCCPLVC) form a C4-type; degenerate zinc finger. Residues 1419–1426 (EYNHRHSV) are RNA-binding. The interval 1430–1435 (LEALFQ) is oligomerization. An intramembrane segment occupies 1502-1517 (ALTTFVSVAGIIYIIY). The Cytoplasmic segment spans residues 1518 to 2191 (KLFAGFQGAY…TLRRKWLDSF (674 aa)). Tyr-1527 is subject to O-(5'-phospho-RNA)-tyrosine. Positions 1547–1725 (GPAFEFAVAM…FSAALLKHYF (179 aa)) constitute a Peptidase C3 domain. Active-site for protease 3C activity residues include His-1586, Glu-1617, and Cys-1693. Residues 1956 to 2072 (GHLIAFDYSG…SYPWPIDASL (117 aa)) enclose the RdRp catalytic domain. Mg(2+)-binding residues include Asp-1962 and Asp-2058.

It belongs to the picornaviruses polyprotein family. Interacts with capsid protein VP1 and capsid protein VP3 to form heterotrimeric protomers. As to quaternary structure, interacts with capsid protein VP0, and capsid protein VP3 to form heterotrimeric protomers. Five protomers subsequently associate to form pentamers which serve as building blocks for the capsid. Interacts with capsid protein VP2, capsid protein VP3 and capsid protein VP4 following cleavage of capsid protein VP0. Interacts with host CD55 and FCGRT; these interactions promote virus attachment to the host cell and subsequent internalization. In terms of assembly, interacts with capsid protein VP1 and capsid protein VP3 in the mature capsid. Interacts with host CD55 and FCGRT; these interactions promote virus attachment to the host cell and subsequent internalization. Interacts with capsid protein VP0 and capsid protein VP1 to form heterotrimeric protomers. Five protomers subsequently associate to form pentamers which serve as building blocks for the capsid. Interacts with capsid protein VP4 in the mature capsid. Interacts with protein 2C; this interaction may be important for virion morphogenesis. Interacts with host FCGRT; this interaction promotes virus attachment to the host cell and subsequent internalization. As to quaternary structure, interacts with capsid protein VP1 and capsid protein VP3. In terms of assembly, homodimer. Homohexamer; forms a hexameric ring structure with 6-fold symmetry characteristic of AAA+ ATPases. Interacts (via N-terminus) with host RTN3 (via reticulon domain); this interaction is important for viral replication. Interacts with capsid protein VP3; this interaction may be important for virion morphogenesis. As to quaternary structure, interacts with protein 3CD. In terms of assembly, homodimer. Interacts with host GBF1. Interacts (via GOLD domain) with host ACBD3 (via GOLD domain); this interaction allows the formation of a viral protein 3A/ACBD3 heterotetramer with a 2:2 stoichiometry, which will stimulate the recruitment of host PI4KB in order to synthesize PI4P at the viral RNA replication sites. Interacts with RNA-directed RNA polymerase. As to quaternary structure, interacts with protein 3AB and with RNA-directed RNA polymerase. In terms of assembly, interacts with Viral protein genome-linked and with protein 3CD. Mg(2+) is required as a cofactor. Specific enzymatic cleavages in vivo by the viral proteases yield processing intermediates and the mature proteins. In terms of processing, myristoylation is required for the formation of pentamers during virus assembly. Further assembly of 12 pentamers and a molecule of genomic RNA generates the provirion. Post-translationally, during virion maturation, immature virions are rendered infectious following cleavage of VP0 into VP4 and VP2. This maturation seems to be an autocatalytic event triggered by the presence of RNA in the capsid and it is followed by a conformational change infectious virion. Myristoylation is required during RNA encapsidation and formation of the mature virus particle. In terms of processing, VPg is uridylylated by the polymerase into VPg-pUpU. This acts as a nucleotide-peptide primer for the genomic RNA replication.

It is found in the virion. The protein resides in the host cytoplasm. It localises to the host cytoplasmic vesicle membrane. The protein localises to the host nucleus. It carries out the reaction a ribonucleoside 5'-triphosphate + H2O = a ribonucleoside 5'-diphosphate + phosphate + H(+). The enzyme catalyses Selective cleavage of Tyr-|-Gly bond in the picornavirus polyprotein.. The catalysed reaction is RNA(n) + a ribonucleoside 5'-triphosphate = RNA(n+1) + diphosphate. It catalyses the reaction Selective cleavage of Gln-|-Gly bond in the poliovirus polyprotein. In other picornavirus reactions Glu may be substituted for Gln, and Ser or Thr for Gly.. With respect to regulation, replication or transcription is subject to high level of random mutations by the nucleotide analog ribavirin. Functionally, forms an icosahedral capsid of pseudo T=3 symmetry with capsid proteins VP2 and VP3. The capsid is 300 Angstroms in diameter, composed of 60 copies of each capsid protein and enclosing the viral positive strand RNA genome. Capsid protein VP1 mainly forms the vertices of the capsid. Capsid protein VP1 interacts with host cell receptor to provide virion attachment to target host cells. This attachment induces virion internalization. Tyrosine kinases are probably involved in the entry process. After binding to its receptor, the capsid undergoes conformational changes. Capsid protein VP1 N-terminus (that contains an amphipathic alpha-helix) and capsid protein VP4 are externalized. Together, they shape a pore in the host membrane through which viral genome is translocated to host cell cytoplasm. Forms an icosahedral capsid of pseudo T=3 symmetry with capsid proteins VP2 and VP3. The capsid is 300 Angstroms in diameter, composed of 60 copies of each capsid protein and enclosing the viral positive strand RNA genome. Its function is as follows. Lies on the inner surface of the capsid shell. After binding to the host receptor, the capsid undergoes conformational changes. Capsid protein VP4 is released, Capsid protein VP1 N-terminus is externalized, and together, they shape a pore in the host membrane through which the viral genome is translocated into the host cell cytoplasm. In terms of biological role, component of immature procapsids, which is cleaved into capsid proteins VP4 and VP2 after maturation. Allows the capsid to remain inactive before the maturation step. Functionally, cysteine protease that cleaves viral polyprotein and specific host proteins. It is responsible for the autocatalytic cleavage between the P1 and P2 regions, which is the first cleavage occurring in the polyprotein. Also cleaves the host translation initiation factor EIF4G1, in order to shut down the capped cellular mRNA translation. Inhibits the host nucleus-cytoplasm protein and RNA trafficking by cleaving host members of the nuclear pores. Counteracts stress granule formation probably by antagonizing its assembly or promoting its dissassembly. Plays an essential role in the virus replication cycle by acting as a viroporin. Creates a pore in the host endoplasmic reticulum and as a consequence releases Ca2+ in the cytoplasm of infected cell. In turn, high levels of cytoplasmic calcium may trigger membrane trafficking and transport of viral ER-associated proteins to viroplasms, sites of viral genome replication. Its function is as follows. Induces and associates with structural rearrangements of intracellular membranes. Displays RNA-binding, nucleotide binding and NTPase activities. May play a role in virion morphogenesis and viral RNA encapsidation by interacting with the capsid protein VP3. In terms of biological role, localizes the viral replication complex to the surface of membranous vesicles. Together with protein 3CD binds the Cis-Active RNA Element (CRE) which is involved in RNA synthesis initiation. Acts as a cofactor to stimulate the activity of 3D polymerase, maybe through a nucleid acid chaperone activity. Functionally, localizes the viral replication complex to the surface of membranous vesicles. It inhibits host cell endoplasmic reticulum-to-Golgi apparatus transport and causes the disassembly of the Golgi complex, possibly through GBF1 interaction. This would result in depletion of MHC, trail receptors and IFN receptors at the host cell surface. Plays an essential role in viral RNA replication by recruiting ACBD3 and PI4KB at the viral replication sites, thereby allowing the formation of the rearranged membranous structures where viral replication takes place. Acts as a primer for viral RNA replication and remains covalently bound to viral genomic RNA. VPg is uridylylated prior to priming replication into VPg-pUpU. The oriI viral genomic sequence may act as a template for this. The VPg-pUpU is then used as primer on the genomic RNA poly(A) by the RNA-dependent RNA polymerase to replicate the viral genome. During genome replication, the VPg-RNA linkage is removed by the host TDP2, thereby accelerating replication. During the late stage of the replication cycle, host TDP2 is excluded from sites of viral RNA synthesis and encapsidation, allowing for the generation of progeny virions. Its function is as follows. Involved in the viral replication complex and viral polypeptide maturation. It exhibits protease activity with a specificity and catalytic efficiency that is different from protease 3C. Protein 3CD binds to the 5'UTR of the viral genome. In terms of biological role, replicates the viral genomic RNA on the surface of intracellular membranes. May form linear arrays of subunits that propagate along a strong head-to-tail interaction called interface-I. Covalently attaches UMP to a tyrosine of VPg, which is used to prime RNA synthesis. The positive stranded RNA genome is first replicated at virus induced membranous vesicles, creating a dsRNA genomic replication form. This dsRNA is then used as template to synthesize positive stranded RNA genomes. ss(+)RNA genomes are either translated, replicated or encapsidated. Functionally, major viral protease that mediates proteolytic processing of the polyprotein. Cleaves host EIF5B, contributing to host translation shutoff. Also cleaves host PABPC1, contributing to host translation shutoff. Cleaves host NLRP1, triggers host N-glycine-mediated degradation of the autoinhibitory NLRP1 N-terminal fragment. In Echovirus 6 (strain Charles), this protein is Genome polyprotein.